A 239-amino-acid polypeptide reads, in one-letter code: Phosphoribosylaminoimidazole-succinocarboxamide synthase (239 aa).

Belongs to the SAICAR synthetase family.

The catalysed reaction is 5-amino-1-(5-phospho-D-ribosyl)imidazole-4-carboxylate + L-aspartate + ATP = (2S)-2-[5-amino-1-(5-phospho-beta-D-ribosyl)imidazole-4-carboxamido]succinate + ADP + phosphate + 2 H(+). It functions in the pathway purine metabolism; IMP biosynthesis via de novo pathway; 5-amino-1-(5-phospho-D-ribosyl)imidazole-4-carboxamide from 5-amino-1-(5-phospho-D-ribosyl)imidazole-4-carboxylate: step 1/2. In Chlorobium luteolum (strain DSM 273 / BCRC 81028 / 2530) (Pelodictyon luteolum), this protein is Phosphoribosylaminoimidazole-succinocarboxamide synthase.